Consider the following 102-residue polypeptide: PqqA binding protein (102 aa).

This sequence belongs to the PqqD family. Monomer. Interacts with PqqE.

It participates in cofactor biosynthesis; pyrroloquinoline quinone biosynthesis. Its function is as follows. Functions as a PqqA binding protein and presents PqqA to PqqE, in the pyrroloquinoline quinone (PQQ) biosynthetic pathway. The chain is PqqA binding protein from Rhodopseudomonas palustris (strain ATCC BAA-98 / CGA009).